Reading from the N-terminus, the 432-residue chain is WD repeat-containing protein 18 (432 aa).

WD repeat units follow at residues Gly-36–Gln-75, Met-78–Ile-116, Arg-119–Pro-158, His-170–Ser-211, Leu-213–Pro-257, and Gly-267–Thr-306.

This sequence belongs to the WD repeat IPI3/WDR18 family. As to quaternary structure, component of the 5FMC complex, at least composed of PELP1, LAS1L, TEX10, WDR18 and SENP3; the complex interacts with methylated CHTOP and ZNF148. Interacts with NOL9. Component of the PELP1 complex, composed of at least PELP1, TEX10 and WDR18. The complex interacts with pre-60S ribosome particles.

The protein localises to the nucleus. Its subcellular location is the nucleolus. It is found in the nucleoplasm. It localises to the cytoplasm. The protein resides in the dynein axonemal particle. Functions as a component of the Five Friends of Methylated CHTOP (5FMC) complex; the 5FMC complex is recruited to ZNF148 by methylated CHTOP, leading to desumoylation of ZNF148 and subsequent transactivation of ZNF148 target genes. Component of the PELP1 complex involved in the nucleolar steps of 28S rRNA maturation and the subsequent nucleoplasmic transit of the pre-60S ribosomal subunit. May play a role during development. This is WD repeat-containing protein 18 (WDR18) from Homo sapiens (Human).